Consider the following 921-residue polypeptide: Probable serine/threonine-protein kinase DDB_G0275165 (921 aa).

One can recognise a Protein kinase domain in the interval 23 to 277; the sequence is FDPLSIIGSG…SNILGLLEYI (255 aa). Residues 29–37 and Lys-50 each bind ATP; that span reads IGSGGFGKV. The active-site Proton acceptor is the Asp-147. Disordered stretches follow at residues 289–453, 465–492, 530–571, 583–653, 671–698, 737–813, 833–858, and 877–921; these read DYEP…SFPR, RGEE…NEED, RPWN…SDSN, NPTP…PTTI, STAT…SNNN, IQPL…SRSL, SSQQ…TSQF, and FEKS…KPKK. Low complexity-rich tracts occupy residues 310-352, 400-412, and 429-445; these read NNNN…NNNN, SNIN…NNSN, and NING…NNNN. Low complexity-rich tracts occupy residues 539–550 and 583–638; these read NNNNKNNNNNEK and NPTP…SLSS. Over residues 643–653 the composition is skewed to polar residues; sequence PQSTYKVPTTI. Low complexity-rich tracts occupy residues 748-775, 842-857, and 892-910; these read TVAA…PTST, QPSS…PTSQ, and TSSS…PSSP.

This sequence belongs to the protein kinase superfamily. TKL Ser/Thr protein kinase family.

The enzyme catalyses L-seryl-[protein] + ATP = O-phospho-L-seryl-[protein] + ADP + H(+). The catalysed reaction is L-threonyl-[protein] + ATP = O-phospho-L-threonyl-[protein] + ADP + H(+). This Dictyostelium discoideum (Social amoeba) protein is Probable serine/threonine-protein kinase DDB_G0275165.